We begin with the raw amino-acid sequence, 324 residues long: Glyoxylate/hydroxypyruvate reductase B (324 aa).

Catalysis depends on residues Arg237 and Glu266. His285 serves as the catalytic Proton donor.

This sequence belongs to the D-isomer specific 2-hydroxyacid dehydrogenase family. GhrB subfamily. In terms of assembly, homodimer.

It is found in the cytoplasm. The catalysed reaction is glycolate + NADP(+) = glyoxylate + NADPH + H(+). It catalyses the reaction (R)-glycerate + NAD(+) = 3-hydroxypyruvate + NADH + H(+). The enzyme catalyses (R)-glycerate + NADP(+) = 3-hydroxypyruvate + NADPH + H(+). Catalyzes the NADPH-dependent reduction of glyoxylate and hydroxypyruvate into glycolate and glycerate, respectively. This is Glyoxylate/hydroxypyruvate reductase B from Salmonella typhi.